The chain runs to 366 residues: Ribosomal RNA large subunit methyltransferase M (366 aa).

Residues Ser188, 221 to 224, Asp240, Asp260, and Asp277 contribute to the S-adenosyl-L-methionine site; that span reads CPGG. Lys306 (proton acceptor) is an active-site residue.

This sequence belongs to the class I-like SAM-binding methyltransferase superfamily. RNA methyltransferase RlmE family. RlmM subfamily. Monomer.

It localises to the cytoplasm. The catalysed reaction is cytidine(2498) in 23S rRNA + S-adenosyl-L-methionine = 2'-O-methylcytidine(2498) in 23S rRNA + S-adenosyl-L-homocysteine + H(+). Functionally, catalyzes the 2'-O-methylation at nucleotide C2498 in 23S rRNA. This chain is Ribosomal RNA large subunit methyltransferase M, found in Pectobacterium atrosepticum (strain SCRI 1043 / ATCC BAA-672) (Erwinia carotovora subsp. atroseptica).